Consider the following 156-residue polypeptide: Small ribosomal subunit protein uS7 (156 aa).

The protein belongs to the universal ribosomal protein uS7 family. In terms of assembly, part of the 30S ribosomal subunit. Contacts proteins S9 and S11.

One of the primary rRNA binding proteins, it binds directly to 16S rRNA where it nucleates assembly of the head domain of the 30S subunit. Is located at the subunit interface close to the decoding center, probably blocks exit of the E-site tRNA. The sequence is that of Small ribosomal subunit protein uS7 from Pseudarthrobacter chlorophenolicus (strain ATCC 700700 / DSM 12829 / CIP 107037 / JCM 12360 / KCTC 9906 / NCIMB 13794 / A6) (Arthrobacter chlorophenolicus).